Reading from the N-terminus, the 144-residue chain is Large ribosomal subunit protein uL15 (144 aa).

A disordered region spans residues 1 to 52 (MRLNSLSPAEGAKHSAKRLGRGIGSGLGKTGGRGHKGQKSRTGGGVRRGFEG). Residues 21 to 31 (RGIGSGLGKTG) are compositionally biased toward gly residues.

Belongs to the universal ribosomal protein uL15 family. Part of the 50S ribosomal subunit.

In terms of biological role, binds to the 23S rRNA. This Haemophilus ducreyi (strain 35000HP / ATCC 700724) protein is Large ribosomal subunit protein uL15.